We begin with the raw amino-acid sequence, 259 residues long: Flap endonuclease Xni (259 aa).

Asp109 contributes to the Mg(2+) binding site. The 5'-3' exonuclease domain occupies 165-255; it reads VKPQQLSDYW…FNLQDLRFTA (91 aa). K(+)-binding residues include Leu176, Ile187, and Ile190. The interaction with DNA stretch occupies residues 189 to 194; sequence GIGPKA.

This sequence belongs to the Xni family. It depends on Mg(2+) as a cofactor. Requires K(+) as cofactor.

Functionally, has flap endonuclease activity. During DNA replication, flap endonucleases cleave the 5'-overhanging flap structure that is generated by displacement synthesis when DNA polymerase encounters the 5'-end of a downstream Okazaki fragment. The chain is Flap endonuclease Xni from Vibrio vulnificus (strain CMCP6).